Consider the following 226-residue polypeptide: UPF0758 protein PputW619_0186 (226 aa).

One can recognise an MPN domain in the interval Ala-102–Ile-224. Zn(2+) is bound by residues His-173, His-175, and Asp-186. The short motif at His-173–Asp-186 is the JAMM motif element.

This sequence belongs to the UPF0758 family.

The polypeptide is UPF0758 protein PputW619_0186 (Pseudomonas putida (strain W619)).